Reading from the N-terminus, the 85-residue chain is Small ribosomal subunit protein uS17 (85 aa).

The protein belongs to the universal ribosomal protein uS17 family. Part of the 30S ribosomal subunit.

Functionally, one of the primary rRNA binding proteins, it binds specifically to the 5'-end of 16S ribosomal RNA. This Trichlorobacter lovleyi (strain ATCC BAA-1151 / DSM 17278 / SZ) (Geobacter lovleyi) protein is Small ribosomal subunit protein uS17.